Consider the following 338-residue polypeptide: Cytoskeleton protein RodZ (338 aa).

At 1-111 (MNTEATHDQN…LGKRRKKRDG (111 aa)) the chain is on the cytoplasmic side. The HTH cro/C1-type domain occupies 19 to 71 (LRNAREQLGLSQQAVAERLCLKVSTVRDIEEDKAPADLASTFLRGYIRSYARL). The segment at residues 30-49 (QQAVAERLCLKVSTVRDIEE) is a DNA-binding region (H-T-H motif). The chain crosses the membrane as a helical; Signal-anchor for type II membrane protein span at residues 112-132 (WLMTFTWLVLFVVIGLSGAWW). Over 133–338 (WQDHKAQQEE…TLNAEQSPAQ (206 aa)) the chain is Periplasmic. Polar residues predominate over residues 155 to 169 (NANGTNSQSIPLENS). Positions 155 to 240 (NANGTNSQSI…TTPDTATPLP (86 aa)) are disordered. The span at 170–188 (TTTVPEATPAPAAPVDTTA) shows a compositional bias: low complexity. Residues 203-217 (EPQQNAVVPPSQANV) show a composition bias toward polar residues. The segment covering 218 to 240 (DTATTAPAAPATTTTPDTATPLP) has biased composition (low complexity).

The protein belongs to the RodZ family.

The protein resides in the cell inner membrane. Its function is as follows. Cytoskeletal protein that is involved in cell-shape control through regulation of the length of the long axis. This chain is Cytoskeleton protein RodZ, found in Escherichia fergusonii (strain ATCC 35469 / DSM 13698 / CCUG 18766 / IAM 14443 / JCM 21226 / LMG 7866 / NBRC 102419 / NCTC 12128 / CDC 0568-73).